Consider the following 513-residue polypeptide: ATP synthase subunit alpha (513 aa).

171–178 (GDRQIGKT) serves as a coordination point for ATP.

Belongs to the ATPase alpha/beta chains family. In terms of assembly, F-type ATPases have 2 components, CF(1) - the catalytic core - and CF(0) - the membrane proton channel. CF(1) has five subunits: alpha(3), beta(3), gamma(1), delta(1), epsilon(1). CF(0) has three main subunits: a(1), b(2) and c(9-12). The alpha and beta chains form an alternating ring which encloses part of the gamma chain. CF(1) is attached to CF(0) by a central stalk formed by the gamma and epsilon chains, while a peripheral stalk is formed by the delta and b chains.

The protein resides in the cell membrane. The catalysed reaction is ATP + H2O + 4 H(+)(in) = ADP + phosphate + 5 H(+)(out). Its function is as follows. Produces ATP from ADP in the presence of a proton gradient across the membrane. The alpha chain is a regulatory subunit. The protein is ATP synthase subunit alpha of Wolbachia pipientis subsp. Culex pipiens (strain wPip).